Here is a 195-residue protein sequence, read N- to C-terminus: ATP-dependent Clp protease proteolytic subunit (195 aa).

Serine 98 functions as the Nucleophile in the catalytic mechanism. Residue histidine 123 is part of the active site.

Belongs to the peptidase S14 family. Fourteen ClpP subunits assemble into 2 heptameric rings which stack back to back to give a disk-like structure with a central cavity, resembling the structure of eukaryotic proteasomes.

It localises to the cytoplasm. The enzyme catalyses Hydrolysis of proteins to small peptides in the presence of ATP and magnesium. alpha-casein is the usual test substrate. In the absence of ATP, only oligopeptides shorter than five residues are hydrolyzed (such as succinyl-Leu-Tyr-|-NHMec, and Leu-Tyr-Leu-|-Tyr-Trp, in which cleavage of the -Tyr-|-Leu- and -Tyr-|-Trp bonds also occurs).. Its function is as follows. Cleaves peptides in various proteins in a process that requires ATP hydrolysis. Has a chymotrypsin-like activity. Plays a major role in the degradation of misfolded proteins. The protein is ATP-dependent Clp protease proteolytic subunit of Staphylococcus aureus (strain Mu3 / ATCC 700698).